Here is a 224-residue protein sequence, read N- to C-terminus: UPF0173 metal-dependent hydrolase EAT1b_0495 (224 aa).

This sequence belongs to the UPF0173 family.

This chain is UPF0173 metal-dependent hydrolase EAT1b_0495, found in Exiguobacterium sp. (strain ATCC BAA-1283 / AT1b).